A 143-amino-acid chain; its full sequence is Cofilin (143 aa).

In terms of domain architecture, ADF-H spans Gly-5 to Ser-137.

The protein belongs to the actin-binding proteins ADF family.

The protein resides in the cytoplasm. The protein localises to the cytoskeleton. It is found in the nucleus matrix. Its function is as follows. Controls reversibly actin polymerization and depolymerization in a pH-sensitive manner. It has the ability to bind G- and F-actin in a 1:1 ratio of cofilin to actin. Binding to F-actin is regulated by tropomyosin. It is the major component of intranuclear and cytoplasmic actin rods. Required for accumulation of actin at the cell division site via depolymerizing actin at the cell ends. In association with myosin II has a role in the assembly of the contractile ring via severing actin filaments. Involved in the maintenance of the contractile ring once formed. In association with profilin and capping protein, has a role in the mitotic reorganization of the actin cytoskeleton. This chain is Cofilin (COF1), found in Kluyveromyces lactis (strain ATCC 8585 / CBS 2359 / DSM 70799 / NBRC 1267 / NRRL Y-1140 / WM37) (Yeast).